The sequence spans 212 residues: Ribonuclease HII (212 aa).

Residues 28–212 (SLIAGIDEVG…KSFAPVRQVF (185 aa)) form the RNase H type-2 domain. Residues Asp34, Glu35, and Asp127 each coordinate a divalent metal cation.

This sequence belongs to the RNase HII family. It depends on Mn(2+) as a cofactor. Requires Mg(2+) as cofactor.

It is found in the cytoplasm. The enzyme catalyses Endonucleolytic cleavage to 5'-phosphomonoester.. Endonuclease that specifically degrades the RNA of RNA-DNA hybrids. This Chlamydia abortus (strain DSM 27085 / S26/3) (Chlamydophila abortus) protein is Ribonuclease HII.